A 131-amino-acid polypeptide reads, in one-letter code: Small ribosomal subunit protein uS8 (131 aa).

The protein belongs to the universal ribosomal protein uS8 family. Part of the 30S ribosomal subunit. Contacts proteins S5 and S12.

Functionally, one of the primary rRNA binding proteins, it binds directly to 16S rRNA central domain where it helps coordinate assembly of the platform of the 30S subunit. The polypeptide is Small ribosomal subunit protein uS8 (Dictyoglomus thermophilum (strain ATCC 35947 / DSM 3960 / H-6-12)).